The sequence spans 576 residues: MEFRVHLQADNEQKIFQNQMKPEPEASYLINQRRSANYKPNIWKNDFLDQSLISKYDGDEYRKLSEKLIEEVKIYISAETMDLVAKLELIDSVRKLGLANLFEKEIKEALDSIAAIESDNLGTRDDLYGTALHFKILRQHGYKVSQDIFGRFMDEKGTLENHHFAHLKGMLELFEASNLGFEGEDILDEAKASLTLALRDSGHICYPDSNLSRDVVHSLELPSHRRVQWFDVKWQINAYEKDICRVNATLLELAKLNFNVVQAQLQKNLREASRWWANLGIADNLKFARDRLVECFACAVGVAFEPEHSSFRICLTKVINLVLIIDDVYDIYGSEEELKHFTNAVDRWDSRETEQLPECMKMCFQVLYNTTCEIAREIEEENGWNQVLPQLTKVWADFCKALLVEAEWYNKSHIPTLEEYLRNGCISSSVSVLLVHSFFSITHEGTKEMADFLHKNEDLLYNISLIVRLNNDLGTSAAEQERGDSPSSIVCYMREVNASEETARKNIKGMIDNAWKKVNGKCFTTNQVPFLSSFMNNATNMARVAHSLYKDGDGFGDQEKGPRTHILSLLFQPLVN.

(2E,6E)-farnesyl diphosphate is bound by residues Arg289, Asp326, Asp330, Arg468, and Asn471. Mg(2+) is bound by residues Asp326 and Asp330. The DDXXD motif signature appears at 326-330; that stretch reads DDVYD. Mg(2+) contacts are provided by Asn471, Thr475, and Glu479. The K(+) site is built by Asp484 and Ser487.

The protein belongs to the terpene synthase family. Tpsb subfamily. Monomer. The cofactor is Mg(2+). Mn(2+) is required as a cofactor. K(+) serves as cofactor.

It is found in the cytoplasm. The enzyme catalyses (2E,6E)-farnesyl diphosphate = (3E,6E)-alpha-farnesene + diphosphate. Sesquiterpene synthase catalyzing the production of (E,E)-alpha-farnesene, the predominant terpene produced during storage of fruits. Produces all six isomers (E,E)-alpha-farnesene, (Z,E)-alpha-farnesene, (E,Z)-alpha-farnesene, (Z,Z)-alpha-farnesene, (E)-beta-farnesene and (Z)-beta-farnesene from a mix of isomeric forms of the farnesyl diphosphate precursor. Able to convert geranyl diphosphate to the monoterpenes (E)-beta-ocimene, linalool and beta-myrcene. Also has a prenyltransferase activity producing alpha-farnesene directly from geranyl diphosphate and isoprenyl diphosphate. This is (E,E)-alpha-farnesene synthase (AFS1) from Malus domestica (Apple).